The sequence spans 207 residues: Small ribosomal subunit protein uS2 (207 aa).

Belongs to the universal ribosomal protein uS2 family.

This is Small ribosomal subunit protein uS2 from Nitrosopumilus maritimus (strain SCM1).